The primary structure comprises 127 residues: Glycine cleavage system H protein (127 aa).

Residues 22–104 (AVVIGITHFA…YEGAWMVKVE (83 aa)) enclose the Lipoyl-binding domain. Lys-63 carries the N6-lipoyllysine modification.

Belongs to the GcvH family. In terms of assembly, the glycine cleavage system is composed of four proteins: P, T, L and H. The cofactor is (R)-lipoate.

In terms of biological role, the glycine cleavage system catalyzes the degradation of glycine. The H protein shuttles the methylamine group of glycine from the P protein to the T protein. Functionally, is also involved in protein lipoylation via its role as an octanoyl/lipoyl carrier protein intermediate. The protein is Glycine cleavage system H protein of Bacillus mycoides (strain KBAB4) (Bacillus weihenstephanensis).